We begin with the raw amino-acid sequence, 243 residues long: Vesicle-associated membrane protein-associated protein B (243 aa).

Position 2 is an N-acetylalanine (alanine 2). Over 2-218 (AKVEQVLSLE…AALAATGKEE (217 aa)) the chain is Cytoplasmic. The region spanning 7-124 (VLSLEPQHEL…MDSKLRCVFE (118 aa)) is the MSP domain. At serine 146 the chain carries Phosphoserine. Lysine 147 is covalently cross-linked (Glycyl lysine isopeptide (Lys-Gly) (interchain with G-Cter in SUMO1)). Phosphoserine is present on residues serine 156 and serine 159. Positions 161–196 (LDDTEVKKVMEECRRLQGEVQRLREESRQLKEEDGL) form a coiled coil. Serine 206 bears the Phosphoserine mark. Residues 219–239 (GLSARLLALVVLFFIVGVIIG) traverse the membrane as a helical; Anchor for type IV membrane protein segment.

It belongs to the VAMP-associated protein (VAP) (TC 9.B.17) family. In terms of assembly, homodimer, and heterodimer with VAPA. Interacts with VAMP1 and VAMP2. Interacts (via MSP domain) with ZFYVE27. Interacts with RMDN3. Interacts with KIF5A in a ZFYVE27-dependent manner. Interacts (via MSP domain) with STARD3 (via phospho-FFAT motif). Interacts with STARD3NL (via FFAT motif). Interacts with CERT1. Interacts with PLEKHA3 and SACM1L to form a ternary complex. Interacts with VPS13A (via FFAT motif). Interacts with RB1CC1 (via phosphorylated FFAT motif), MIGA2 (via phosphorylated FFAT motif), RMDN3 (via phosphorylated FFAT motif), OSBPL1A (via FFAT motif), KCNB1 (via phosphorylated FFAT motif) and KCNB2 (via phosphorylated FFAT motif). Interacts (via MSP domain) with WDR44 (via FFAT motif); the interactions connect the endoplasmic reticulum (ER) with the endosomal tubule.

Its subcellular location is the endoplasmic reticulum membrane. In terms of biological role, endoplasmic reticulum (ER)-anchored protein that mediates the formation of contact sites between the ER and endosomes via interaction with FFAT motif-containing proteins such as STARD3 or WDR44. Interacts with STARD3 in a FFAT motif phosphorylation dependent manner. Via interaction with WDR44 participates in neosynthesized protein export. Participates in the endoplasmic reticulum unfolded protein response (UPR) by inducing ERN1/IRE1 activity. Involved in cellular calcium homeostasis regulation. This is Vesicle-associated membrane protein-associated protein B from Mus musculus (Mouse).